The sequence spans 1442 residues: MTHPSAPRARSNGKEPEKEEPRCVHPDLTPLNVKDLDNKSSSAITNENVSSPTLLPFTERLSAIQPQIPNLLALKEPENGKNKHPDSEQDDGDMKEQRSKNLSPESDDPLLDHRHLQPGDTVSLLSHKATLQMYRDNAKKTNDPMLSYELAVFMLDVSRSLEFSQQMLSRGQDPAAESEQLAKEAMSILRRLADRGHVESQYLAGDCCMNGYGMSKGRPDLGLAYSYFVQAGKRGHPDAAYRAGTCYEKGWGCRRDPAKAVQFYKMAASRKHPGAQYRLGTAELNGELGLKRLAREGVKWLKRSAENATPEFPHALHELALLHEKGIYNVLFVDNEYSCELLAQAVEMGYAPSAYKLGVNYEYGRMGCPQDSGLSIHMYNIAAQQNHKEACFALTSWYLVGVPGILPQSDTEAYLWAKRAAEQGLAKAEYACGYFCENGIGTPRDLGEAKGWYQRAVEHGDNRASSRLNTLSGYTAKPVGIAADEASAKNLPQAIPVQPLSAPFPSAAPISTMRTLGVANYPTPKTMKETQAMQRDLHQQALVAAIEEREKPKTATPTSPQGPSFFGQKGSQGRPSEKPFSPSQPPKEGGKPMSLIAAGPRAGFPKPPTPPPPPPPEPEPDADAQLAANPKSFKSRLLRLGKMGKIRKGAASEGAEGEDAENVAGLEVPEGEEPLSATEKVPDGNEAPKSAPNADADKETGLNKDPAGVGEGAPSPKPETGAMVLSGPKPLGQARGQPPALTPGPSGPSSAAGADGAPRLPGEPKQHTLGDSSKPEAADKMSQEATEKSKDVNNEKSKNKKSEKSGGLSFFGLGKKIMNKGSDKPGSEDKKNQEVPKPSDEASPSIAKPTDTPAPLSPRPDEKNSSLVERSKDSESTSPSSPKPTTGSAEPSVPPMPAMPPSTVVRPSPSMALVPGRLPAIGAPDRTESNPVPASPQIGGIVPSRPPPPGVRPVMPGTMMTSRPFPPGARPGMPPNAQPGARPGMPPNAQPGARPGMPPNAQPGLRPGMPPNVQPGARPGMPPNVQPGARPGMPPNAQPGARPGMPPNAQPGLRPGMPPNAQPGLRPGMPPNVQPGARPGMPPNVQPGARPGMPPNAQPDTLSGLPLNVNAPEANNMLQLHPSAASGVRPPAALQPSLRPGPRPFSPTFPSPAGPSRPNPHLLPGVSSSSDGATPRANGHGVKPGSPPSMPEQHSFAPPAMQPGRPPSPSSPFGRPPTGPFSPSAVRMPRMPSQSSMHQSGNGPSPPKPGQMMNVSLPARTNQPHLGGASPRPPRPTSPPPFLTSQQPNRPPVPRGVMPPGSGPSMRPPQPPAIIPPPPRSPPARVNQPSLGPPGSSMPQGRMDMPSGPTAQGQSPLSKAMVSPPKMSSPDRPPFAPPTHVTPPKTPAKASGFSTPDSSSSKIMEFKDAESDNLNFGSATTTENAAAVGEDKSVRKKWLGFL.

Disordered stretches follow at residues 1 to 54 (MTHP…SPTL) and 72 to 117 (LALK…RHLQ). The segment covering 12–25 (NGKEPEKEEPRCVH) has biased composition (basic and acidic residues). Residues 39 to 53 (KSSSAITNENVSSPT) are compositionally biased toward polar residues. Positions 75–99 (KEPENGKNKHPDSEQDDGDMKEQRS) are enriched in basic and acidic residues. 7 Sel1-like repeats span residues 198–236 (VESQYLAGDCCMNGYGMSKGRPDLGLAYSYFVQAGKRGH), 237–272 (PDAAYRAGTCYEKGWGCRRDPAKAVQFYKMAASRKH), 273–309 (PGAQYRLGTAELNGELGLKRLAREGVKWLKRSAENAT), 313–350 (PHALHELALLHEKGIYNVLFVDNEYSCELLAQAVEMGY), 351–387 (APSAYKLGVNYEYGRMGCPQDSGLSIHMYNIAAQQNH), 388–425 (KEACFALTSWYLVGVPGILPQSDTEAYLWAKRAAEQGL), and 426–461 (AKAEYACGYFCENGIGTPRDLGEAKGWYQRAVEHGD). The interval 550–1402 (EKPKTATPTS…FSTPDSSSSK (853 aa)) is disordered. Residues 605–617 (PKPPTPPPPPPPE) show a composition bias toward pro residues. Over residues 633 to 648 (FKSRLLRLGKMGKIRK) the composition is skewed to basic residues. Residues 747 to 758 (GPSSAAGADGAP) are compositionally biased toward low complexity. Composition is skewed to basic and acidic residues over residues 762–804 (GEPK…KSEK), 821–840 (GSDKPGSEDKKNQEVPKPSD), and 859–875 (RPDEKNSSLVERSKDSE). Residues 876–891 (STSPSSPKPTTGSAEP) show a composition bias toward low complexity. 3 stretches are compositionally biased toward pro residues: residues 964 to 977 (PFPPGARPGMPPNA), 1139 to 1158 (RPGPRPFSPTFPSPAGPSRP), and 1200 to 1220 (AMQPGRPPSPSSPFGRPPTGP). Residues 1232 to 1243 (PSQSSMHQSGNG) show a composition bias toward polar residues. Positions 1271-1282 (PRPPRPTSPPPF) are enriched in pro residues. Over residues 1295 to 1305 (RGVMPPGSGPS) the composition is skewed to low complexity. Composition is skewed to pro residues over residues 1306–1322 (MRPPQPPAIIPPPPRSP) and 1371–1386 (DRPPFAPPTHVTPPKT). Polar residues predominate over residues 1392-1402 (GFSTPDSSSSK).

Belongs to the SKT5 family.

It localises to the cell membrane. Activator of the chitin synthase CHS3 which polymerizes chitin, a structural polymer of the fungal cell wall. The polypeptide is Chitin synthase regulator SKT5 (Malassezia restricta (strain ATCC 96810 / NBRC 103918 / CBS 7877) (Seborrheic dermatitis infection agent)).